The chain runs to 293 residues: N-acetylneuraminate lyase (293 aa).

Aceneuramate is bound by residues Ser48 and Ser49. Tyr137 acts as the Proton donor in catalysis. The active-site Schiff-base intermediate with substrate is Lys165. Residues Thr167, Gly189, Asp191, Glu192, and Ser208 each coordinate aceneuramate.

This sequence belongs to the DapA family. NanA subfamily. Homotetramer.

The protein localises to the cytoplasm. It catalyses the reaction aceneuramate = aldehydo-N-acetyl-D-mannosamine + pyruvate. The protein operates within amino-sugar metabolism; N-acetylneuraminate degradation; D-fructose 6-phosphate from N-acetylneuraminate: step 1/5. Functionally, catalyzes the reversible aldol cleavage of N-acetylneuraminic acid (sialic acid; Neu5Ac) to form pyruvate and N-acetylmannosamine (ManNAc) via a Schiff base intermediate. The protein is N-acetylneuraminate lyase of Staphylococcus aureus (strain MRSA252).